The chain runs to 440 residues: Methionine aminopeptidase 2-2 (440 aa).

The tract at residues 1-102 (MAAQVPTEAL…KGQEEEYRDE (102 aa)) is disordered. A compositionally biased stretch (acidic residues) spans 36–46 (DSDDSDEEGEE). A compositionally biased stretch (basic residues) spans 56-70 (AKKKKKNKKKKKKKS). His194 is a substrate binding site. A divalent metal cation is bound by residues Asp214, Asp225, and His294. Position 302 (His302) interacts with substrate. Residues Glu327 and Glu421 each coordinate a divalent metal cation.

It belongs to the peptidase M24A family. Methionine aminopeptidase eukaryotic type 2 subfamily. Co(2+) is required as a cofactor. The cofactor is Zn(2+). Mn(2+) serves as cofactor. It depends on Fe(2+) as a cofactor.

The protein localises to the cytoplasm. It carries out the reaction Release of N-terminal amino acids, preferentially methionine, from peptides and arylamides.. In terms of biological role, cotranslationally removes the N-terminal methionine from nascent proteins. The N-terminal methionine is often cleaved when the second residue in the primary sequence is small and uncharged (Met-Ala-, Cys, Gly, Pro, Ser, Thr, or Val). In Colletotrichum graminicola (strain M1.001 / M2 / FGSC 10212) (Maize anthracnose fungus), this protein is Methionine aminopeptidase 2-2.